A 445-amino-acid polypeptide reads, in one-letter code: FAS-associated factor 2 (445 aa).

Ala-2 is subject to N-acetylalanine. The UBA domain maps to 12–48 (EQTEKLLQFQDLTGIESMDQCRHTLEQHNWNIEAAVQ). At Lys-167 the chain carries N6-acetyllysine. A coiled-coil region spans residues 275 to 350 (SERLEREERN…EEKERKLECL (76 aa)). The tract at residues 299 to 361 (ASLRADQEKE…PEPSPDDPES (63 aa)) is disordered. A compositionally biased stretch (basic and acidic residues) spans 303–348 (ADQEKERKKREERERKRRKEEEVQQQKLAEERRRRNLQEEKERKLE). The UBX domain maps to 357–439 (DDPESVKIIF…GLSHTEVLFV (83 aa)).

As to quaternary structure, identified in a complex that contains SEL1L, OS9, FAF2/UBXD8, UBE2J1/UBC6E and AUP1. Interacts with YOD1. Interacts (via N-terminus) with UBQLN2 (via C-terminus). Interacts with PNPLA2 and UBAC2. Interacts with ZFAND2B; probably through VCP. Interacts with LMBR1L.

Its subcellular location is the cytoplasm. The protein resides in the lipid droplet. The protein localises to the endoplasmic reticulum. Its function is as follows. Plays an important role in endoplasmic reticulum-associated degradation (ERAD) that mediates ubiquitin-dependent degradation of misfolded endoplasmic reticulum proteins. By controlling the steady-state expression of the IGF1R receptor, indirectly regulates the insulin-like growth factor receptor signaling pathway. Involved in inhibition of lipid droplet degradation by binding to phospholipase PNPL2 and inhibiting its activity by promoting dissociation of PNPL2 from its endogenous activator, ABHD5 which inhibits the rate of triacylglycerol hydrolysis. Involved in stress granule disassembly: associates with ubiquitinated G3BP1 in response to heat shock, thereby promoting interaction between ubiquitinated G3BP1 and VCP, followed by G3BP1 extraction from stress granules and stress granule disassembly. The chain is FAS-associated factor 2 (FAF2) from Bos taurus (Bovine).